Here is a 164-residue protein sequence, read N- to C-terminus: Protein SprT (164 aa).

The SprT-like domain maps to 14–156 (QQAETFFKRP…LCKRCRETLV (143 aa)). H69 is a binding site for Zn(2+). E70 is an active-site residue. H73 contributes to the Zn(2+) binding site.

This sequence belongs to the SprT family. Zn(2+) is required as a cofactor.

The protein resides in the cytoplasm. The sequence is that of Protein SprT from Pseudomonas putida (strain W619).